Here is a 333-residue protein sequence, read N- to C-terminus: HTH-type transcriptional repressor PurR (333 aa).

The HTH lacI-type domain maps to 2–56; it reads ATIKDVAKLASVSTTTVSHVINKTRFVAEATQKRVWEAVEELNYAPSAVARSLKC. Positions 4–23 form a DNA-binding region, H-T-H motif; the sequence is IKDVAKLASVSTTTVSHVIN. A DNA-binding region spans residues 48-56; the sequence is SAVARSLKC. F73, K189, T191, F220, and D274 together coordinate hypoxanthine.

In terms of assembly, homodimer.

It participates in purine metabolism; purine nucleotide biosynthesis [regulation]. Is the main repressor of the genes involved in the de novo synthesis of purine nucleotides, regulating purB, purC, purEK, purF, purHD, purL, purMN and guaBA expression. PurR is allosterically activated to bind its cognate DNA by binding the purine corepressors, hypoxanthine or guanine, thereby effecting transcription repression. This chain is HTH-type transcriptional repressor PurR, found in Aliivibrio salmonicida (strain LFI1238) (Vibrio salmonicida (strain LFI1238)).